The following is a 348-amino-acid chain: Holliday junction branch migration complex subunit RuvB (348 aa).

The tract at residues 4 to 198 (TTDYGASNTG…FGFTAHLDFY (195 aa)) is large ATPase domain (RuvB-L). ATP contacts are provided by residues Leu37, Arg38, Gly79, Lys82, Thr83, Thr84, 145–147 (EDF), Arg188, Tyr198, and Arg235. A Mg(2+)-binding site is contributed by Thr83. The segment at 199 to 269 (PHEELEKLIE…DVKEALALYQ (71 aa)) is small ATPAse domain (RuvB-S). The head domain (RuvB-H) stretch occupies residues 272–348 (SEGLDRLDIA…DIIFGNYAQR (77 aa)). Arg327 and Arg332 together coordinate DNA.

It belongs to the RuvB family. In terms of assembly, homohexamer. Forms an RuvA(8)-RuvB(12)-Holliday junction (HJ) complex. HJ DNA is sandwiched between 2 RuvA tetramers; dsDNA enters through RuvA and exits via RuvB. An RuvB hexamer assembles on each DNA strand where it exits the tetramer. Each RuvB hexamer is contacted by two RuvA subunits (via domain III) on 2 adjacent RuvB subunits; this complex drives branch migration. In the full resolvosome a probable DNA-RuvA(4)-RuvB(12)-RuvC(2) complex forms which resolves the HJ.

Its subcellular location is the cytoplasm. It catalyses the reaction ATP + H2O = ADP + phosphate + H(+). Its function is as follows. The RuvA-RuvB-RuvC complex processes Holliday junction (HJ) DNA during genetic recombination and DNA repair, while the RuvA-RuvB complex plays an important role in the rescue of blocked DNA replication forks via replication fork reversal (RFR). RuvA specifically binds to HJ cruciform DNA, conferring on it an open structure. The RuvB hexamer acts as an ATP-dependent pump, pulling dsDNA into and through the RuvAB complex. RuvB forms 2 homohexamers on either side of HJ DNA bound by 1 or 2 RuvA tetramers; 4 subunits per hexamer contact DNA at a time. Coordinated motions by a converter formed by DNA-disengaged RuvB subunits stimulates ATP hydrolysis and nucleotide exchange. Immobilization of the converter enables RuvB to convert the ATP-contained energy into a lever motion, pulling 2 nucleotides of DNA out of the RuvA tetramer per ATP hydrolyzed, thus driving DNA branch migration. The RuvB motors rotate together with the DNA substrate, which together with the progressing nucleotide cycle form the mechanistic basis for DNA recombination by continuous HJ branch migration. Branch migration allows RuvC to scan DNA until it finds its consensus sequence, where it cleaves and resolves cruciform DNA. The chain is Holliday junction branch migration complex subunit RuvB from Bifidobacterium longum (strain DJO10A).